We begin with the raw amino-acid sequence, 278 residues long: Movement protein (278 aa).

The interval Thr-256–Asn-278 is disordered. A compositionally biased stretch (basic and acidic residues) spans Gln-259–Gly-271.

It belongs to the tobamoviruses movement protein family.

This is Movement protein from Vitis vinifera (Grape).